We begin with the raw amino-acid sequence, 426 residues long: Serine--tRNA ligase (426 aa).

An L-serine-binding site is contributed by 233-235 (TAE). An ATP-binding site is contributed by 264–266 (RSE). Glu-287 is an L-serine binding site. 351 to 354 (EISS) contributes to the ATP binding site. Residue Ser-387 coordinates L-serine.

This sequence belongs to the class-II aminoacyl-tRNA synthetase family. Type-1 seryl-tRNA synthetase subfamily. In terms of assembly, homodimer. The tRNA molecule binds across the dimer.

It is found in the cytoplasm. It carries out the reaction tRNA(Ser) + L-serine + ATP = L-seryl-tRNA(Ser) + AMP + diphosphate + H(+). It catalyses the reaction tRNA(Sec) + L-serine + ATP = L-seryl-tRNA(Sec) + AMP + diphosphate + H(+). Its pathway is aminoacyl-tRNA biosynthesis; selenocysteinyl-tRNA(Sec) biosynthesis; L-seryl-tRNA(Sec) from L-serine and tRNA(Sec): step 1/1. Catalyzes the attachment of serine to tRNA(Ser). Is also able to aminoacylate tRNA(Sec) with serine, to form the misacylated tRNA L-seryl-tRNA(Sec), which will be further converted into selenocysteinyl-tRNA(Sec). The protein is Serine--tRNA ligase of Pseudomonas fluorescens (strain Pf0-1).